Consider the following 300-residue polypeptide: Ferredoxin/F(420)H(2)-dependent CoB-CoM heterodisulfide reductase subunit B (300 aa).

Belongs to the HdrB family. As to quaternary structure, the ferredoxin/F(420)H(2)-dependent CoB-CoM heterodisulfide reductase is composed of three subunits; HdrA2, HdrB2 and HdrC2. [4Fe-4S] cluster is required as a cofactor.

The protein localises to the cytoplasm. It carries out the reaction coenzyme B + coenzyme M + 2 oxidized [2Fe-2S]-[ferredoxin] = coenzyme M-coenzyme B heterodisulfide + 2 reduced [2Fe-2S]-[ferredoxin] + 2 H(+). It catalyses the reaction coenzyme B + 2 oxidized coenzyme F420-(gamma-L-Glu)(n) + coenzyme M + 2 reduced [2Fe-2S]-[ferredoxin] + 4 H(+) = coenzyme M-coenzyme B heterodisulfide + 2 reduced coenzyme F420-(gamma-L-Glu)(n) + 2 oxidized [2Fe-2S]-[ferredoxin]. The protein operates within cofactor metabolism; coenzyme M-coenzyme B heterodisulfide reduction; coenzyme B and coenzyme M from coenzyme M-coenzyme B heterodisulfide: step 1/1. Its function is as follows. Part of a complex that catalyzes the reversible reduction of CoM-S-S-CoB to the thiol-coenzymes H-S-CoM (coenzyme M) and H-S-CoB (coenzyme B). Catalyzes the transfer of electrons from ferredoxin to CoM-S-S-CoB during methanogenesis from acetate. Electrons transfer from ferredoxin to CoM-S-S-CoB via HdrA2, HdrC2 and HdrB2. In addition, the complex can use electron bifurcation to direct electron pairs from reduced coenzyme F420 towards the reduction of both ferredoxin and CoB-CoM heterodisulfide. This activity may take place during Fe(III)-dependent anaerobic methane oxidation. This chain is Ferredoxin/F(420)H(2)-dependent CoB-CoM heterodisulfide reductase subunit B, found in Methanosarcina acetivorans (strain ATCC 35395 / DSM 2834 / JCM 12185 / C2A).